The chain runs to 316 residues: 4-hydroxy-3-methylbut-2-enyl diphosphate reductase (316 aa).

Cys12 provides a ligand contact to [4Fe-4S] cluster. (2E)-4-hydroxy-3-methylbut-2-enyl diphosphate-binding residues include His41 and His74. Dimethylallyl diphosphate-binding residues include His41 and His74. Isopentenyl diphosphate is bound by residues His41 and His74. Cys96 is a [4Fe-4S] cluster binding site. His124 lines the (2E)-4-hydroxy-3-methylbut-2-enyl diphosphate pocket. His124 is a dimethylallyl diphosphate binding site. His124 is a binding site for isopentenyl diphosphate. Residue Glu126 is the Proton donor of the active site. Thr168 serves as a coordination point for (2E)-4-hydroxy-3-methylbut-2-enyl diphosphate. Cys198 contacts [4Fe-4S] cluster. The (2E)-4-hydroxy-3-methylbut-2-enyl diphosphate site is built by Ser226, Ser227, Asn228, and Ser270. Dimethylallyl diphosphate contacts are provided by Ser226, Ser227, Asn228, and Ser270. 4 residues coordinate isopentenyl diphosphate: Ser226, Ser227, Asn228, and Ser270.

The protein belongs to the IspH family. The cofactor is [4Fe-4S] cluster.

It carries out the reaction isopentenyl diphosphate + 2 oxidized [2Fe-2S]-[ferredoxin] + H2O = (2E)-4-hydroxy-3-methylbut-2-enyl diphosphate + 2 reduced [2Fe-2S]-[ferredoxin] + 2 H(+). The catalysed reaction is dimethylallyl diphosphate + 2 oxidized [2Fe-2S]-[ferredoxin] + H2O = (2E)-4-hydroxy-3-methylbut-2-enyl diphosphate + 2 reduced [2Fe-2S]-[ferredoxin] + 2 H(+). It participates in isoprenoid biosynthesis; dimethylallyl diphosphate biosynthesis; dimethylallyl diphosphate from (2E)-4-hydroxy-3-methylbutenyl diphosphate: step 1/1. It functions in the pathway isoprenoid biosynthesis; isopentenyl diphosphate biosynthesis via DXP pathway; isopentenyl diphosphate from 1-deoxy-D-xylulose 5-phosphate: step 6/6. In terms of biological role, catalyzes the conversion of 1-hydroxy-2-methyl-2-(E)-butenyl 4-diphosphate (HMBPP) into a mixture of isopentenyl diphosphate (IPP) and dimethylallyl diphosphate (DMAPP). Acts in the terminal step of the DOXP/MEP pathway for isoprenoid precursor biosynthesis. The protein is 4-hydroxy-3-methylbut-2-enyl diphosphate reductase of Acinetobacter baumannii (strain AB307-0294).